Here is a 97-residue protein sequence, read N- to C-terminus: Large ribosomal subunit protein eL21 (97 aa).

It belongs to the eukaryotic ribosomal protein eL21 family.

This chain is Large ribosomal subunit protein eL21, found in Methanospirillum hungatei JF-1 (strain ATCC 27890 / DSM 864 / NBRC 100397 / JF-1).